The primary structure comprises 458 residues: Jacalin-related lectin 22 (458 aa).

3 Jacalin-type lectin domains span residues 5 to 153 (YRKL…YFVL), 160 to 301 (LYKL…YFGP), and 311 to 453 (SKKL…TIVP).

This sequence belongs to the jacalin lectin family. As to quaternary structure, component of the PYK10 complex, at least composed of PYK10/BGLU23, BGLU21, BGLU22, JAL22, JAL23, PBP1/JAL30, PBP2/JAL31, JAL32, JAL33, JAL34, JAL35, GLL22 and GLL23.

Functionally, inhibitor-type lectin that may regulate the correct polymerization and activation of BGLU23/PYK10 upon tissue damage. In Arabidopsis thaliana (Mouse-ear cress), this protein is Jacalin-related lectin 22 (JAL22).